The chain runs to 263 residues: Aquaporin Lacbi1:233199 (263 aa).

The Cytoplasmic segment spans residues 1 to 17 (MFTLAHHRHAIRKPMAE). Residues 18–38 (FFGVALLVIFGAGAACQVVLS) traverse the membrane as a helical segment. Over 39–44 (TNPNSF) the chain is Extracellular. A helical membrane pass occupies residues 45–65 (LSINFGWAIGIAMGAWISGSI). At 66–88 (SGGHINPAITIAMATYRGFPWRE) the chain is on the cytoplasmic side. An NPA 1 motif is present at residues 71–73 (NPA). A helical transmembrane segment spans residues 89-109 (VPSYILAQVLGGVVGAALVYA). Residues 110–143 (NYIHAIDVFEGGRHIRTQATASLFATYALPYMTQ) lie on the Extracellular side of the membrane. The helical transmembrane segment at 144-164 (VSCFFSEFLATAVLAMMVLAL) threads the bilayer. The Cytoplasmic segment spans residues 165–174 (TDNRNGAPTN). The helical transmembrane segment at 175 to 195 (GLSPFALFVLFIGLGASLGME) threads the bilayer. Residues 196–227 (TAYALNPARDFGPRLFLAMAGYGKALFNYRSQ) lie on the Extracellular side of the membrane. The NPA 2 signature appears at 201–203 (NPA). A helical membrane pass occupies residues 228-248 (YWLWAPIIAPVLGAQAGGLLY). At 249-263 (DTFLYDGDDSPIKWR) the chain is on the cytoplasmic side.

The protein belongs to the MIP/aquaporin (TC 1.A.8) family.

It is found in the membrane. The enzyme catalyses H2O(in) = H2O(out). Probable water channel required to facilitate the transport of water across membranes. The chain is Aquaporin Lacbi1:233199 from Laccaria bicolor (strain S238N-H82 / ATCC MYA-4686) (Bicoloured deceiver).